The primary structure comprises 422 residues: Isocitrate dehydrogenase [NADP] (422 aa).

Residue threonine 94 participates in NADP(+) binding. Serine 103, asparagine 105, arginine 109, arginine 119, and arginine 143 together coordinate D-threo-isocitrate. Aspartate 310 contacts Mg(2+). NADP(+) is bound by residues 344–350 (HGTAPKY), asparagine 357, tyrosine 396, and arginine 400.

Belongs to the isocitrate and isopropylmalate dehydrogenases family. Homodimer. It depends on Mg(2+) as a cofactor. Requires Mn(2+) as cofactor.

The catalysed reaction is D-threo-isocitrate + NADP(+) = 2-oxoglutarate + CO2 + NADPH. Its function is as follows. Catalyzes the oxidative decarboxylation of isocitrate to 2-oxoglutarate and carbon dioxide with the concomitant reduction of NADP(+). The chain is Isocitrate dehydrogenase [NADP] (icd) from Staphylococcus epidermidis (strain ATCC 35984 / DSM 28319 / BCRC 17069 / CCUG 31568 / BM 3577 / RP62A).